Consider the following 208-residue polypeptide: Ras-related protein Rab-6B (208 aa).

GTP is bound by residues 20–27, Thr-45, 68–72, and 126–129; these read GEQSVGKT, DTAGQ, and NKTD. Residues 42–50 carry the Effector region motif; the sequence is YQATIGIDF. Residues Cys-206 and Cys-208 are each lipidated (S-geranylgeranyl cysteine). Cys-208 is subject to Cysteine methyl ester.

It belongs to the small GTPase superfamily. Rab family. As to quaternary structure, interacts (GTP-bound) with BICD1 (via C-terminus); the interaction is direct. Interacts (GDP-bound) with DYNLRB1. Interacts (GTP-bound) with APBA1/MINT1. Interacts (GTP-bound) with VPS13B.

The protein localises to the golgi apparatus membrane. The protein resides in the endoplasmic reticulum-Golgi intermediate compartment. It is found in the cytoplasmic vesicle. It carries out the reaction GTP + H2O = GDP + phosphate + H(+). Its activity is regulated as follows. Regulated by guanine nucleotide exchange factors (GEFs) which promote the exchange of bound GDP for free GTP, GTPase activating proteins (GAPs) which increase the GTP hydrolysis activity, and GDP dissociation inhibitors which inhibit the dissociation of the nucleotide from the GTPase. Its function is as follows. The small GTPases Rab are key regulators of intracellular membrane trafficking, from the formation of transport vesicles to their fusion with membranes. Rabs cycle between active GTP-bound and inactive GDP-bound states. In their active state, drive transport of vesicular carriers from donor organelles to acceptor organelles to regulate the membrane traffic that maintains organelle identity and morphology. Recruits VPS13B to the Golgi membrane. Regulates the compacted morphology of the Golgi. Seems to have a role in retrograde membrane traffic at the level of the Golgi complex. May function in retrograde transport in neuronal cells. Plays a role in neuron projection development. The protein is Ras-related protein Rab-6B (RAB6B) of Bos taurus (Bovine).